We begin with the raw amino-acid sequence, 452 residues long: Cysteine--tRNA ligase (452 aa).

Cys27 serves as a coordination point for Zn(2+). The 'HIGH' region signature appears at 29–39 (PTVQDHFHIGH). Zn(2+) is bound by residues Asp207, His232, and Glu236. The short motif at 265–269 (KMSKS) is the 'KMSKS' region element. Lys268 is a binding site for ATP.

It belongs to the class-I aminoacyl-tRNA synthetase family. It depends on Zn(2+) as a cofactor.

Its subcellular location is the cytoplasm. It carries out the reaction tRNA(Cys) + L-cysteine + ATP = L-cysteinyl-tRNA(Cys) + AMP + diphosphate. The polypeptide is Cysteine--tRNA ligase (Thermoplasma acidophilum (strain ATCC 25905 / DSM 1728 / JCM 9062 / NBRC 15155 / AMRC-C165)).